The primary structure comprises 353 residues: Photosystem II protein D1 (353 aa).

Residue threonine 2 is modified to N-acetylthreonine. The residue at position 2 (threonine 2) is a Phosphothreonine. 3 helical membrane-spanning segments follow: residues 29–46 (YIGW…TATS), 118–133 (HFLL…EWEL), and 142–156 (WIAV…AATA). Histidine 118 serves as a coordination point for chlorophyll a. Position 126 (tyrosine 126) interacts with pheophytin a. [CaMn4O5] cluster-binding residues include aspartate 170 and glutamate 189. A helical membrane pass occupies residues 197–218 (FHMLGVAGVFGGSLFSAMHGSL). Histidine 198 serves as a coordination point for chlorophyll a. A quinone is bound by residues histidine 215 and 264–265 (SF). Histidine 215 provides a ligand contact to Fe cation. Position 272 (histidine 272) interacts with Fe cation. Residues 274–288 (FLAAWPVVGIWFTAL) form a helical membrane-spanning segment. The [CaMn4O5] cluster site is built by histidine 332, glutamate 333, aspartate 342, and alanine 344. Residues 345 to 353 (GVEVPSTNG) constitute a propeptide that is removed on maturation.

The protein belongs to the reaction center PufL/M/PsbA/D family. PSII is composed of 1 copy each of membrane proteins PsbA, PsbB, PsbC, PsbD, PsbE, PsbF, PsbH, PsbI, PsbJ, PsbK, PsbL, PsbM, PsbT, PsbX, PsbY, PsbZ, Psb30/Ycf12, at least 3 peripheral proteins of the oxygen-evolving complex and a large number of cofactors. It forms dimeric complexes. The D1/D2 heterodimer binds P680, chlorophylls that are the primary electron donor of PSII, and subsequent electron acceptors. It shares a non-heme iron and each subunit binds pheophytin, quinone, additional chlorophylls, carotenoids and lipids. D1 provides most of the ligands for the Mn4-Ca-O5 cluster of the oxygen-evolving complex (OEC). There is also a Cl(-1) ion associated with D1 and D2, which is required for oxygen evolution. The PSII complex binds additional chlorophylls, carotenoids and specific lipids. is required as a cofactor. Post-translationally, tyr-161 forms a radical intermediate that is referred to as redox-active TyrZ, YZ or Y-Z. In terms of processing, C-terminally processed by CTPA; processing is essential to allow assembly of the oxygen-evolving complex and thus photosynthetic growth.

It localises to the plastid. The protein localises to the chloroplast thylakoid membrane. It carries out the reaction 2 a plastoquinone + 4 hnu + 2 H2O = 2 a plastoquinol + O2. In terms of biological role, photosystem II (PSII) is a light-driven water:plastoquinone oxidoreductase that uses light energy to abstract electrons from H(2)O, generating O(2) and a proton gradient subsequently used for ATP formation. It consists of a core antenna complex that captures photons, and an electron transfer chain that converts photonic excitation into a charge separation. The D1/D2 (PsbA/PsbD) reaction center heterodimer binds P680, the primary electron donor of PSII as well as several subsequent electron acceptors. The protein is Photosystem II protein D1 of Morus indica (Mulberry).